The primary structure comprises 458 residues: Bone morphogenetic protein 3 (458 aa).

A signal peptide spans 1-23 (MAECRPWLVLWVGCCGCLCLALG). Residues 24-348 (ELLNDGLLAV…EQTLKKARRK (325 aa)) constitute a propeptide that is removed on maturation. Asn107 carries N-linked (GlcNAc...) asparagine glycosylation. 2 disordered regions span residues 244–275 (DSVV…KKRS) and 303–335 (ERKP…SQTL). The span at 320 to 329 (NKKKLRKGSR) shows a compositional bias: basic residues. 3 disulfides stabilise this stretch: Cys356–Cys423, Cys385–Cys455, and Cys389–Cys457. Residue Asn449 is glycosylated (N-linked (GlcNAc...) asparagine).

This sequence belongs to the TGF-beta family. Homodimer. Can form heterodimers with ADMP, BMP-2-I and/or BMP-2-II, and DERRIERE.

It localises to the secreted. Its function is as follows. Dorsalizing factor. Antagonizes mesoderm formation by ventralizing BMPs. The polypeptide is Bone morphogenetic protein 3 (bmp3) (Xenopus laevis (African clawed frog)).